We begin with the raw amino-acid sequence, 778 residues long: MNSSDEEDIALSRLAKKSSSITSASTYEDDEDDDIPLAKKSRKKRVESDYEEDEDEVPLKKLSNGRAKKQVKTETKVKKEPKSANKSKSTSKKDTKVKKEKTTVKKESKATSTKVKEESKTQSDSQASVKSETPEEDQGYKWWEVNQEEEGDGYIKWQTLEHNGVMFPPPYEPLPSHVKLYYNNKPVNLPPEAEEVAGFYGAMLETDHAKNPVFQKNFFNDFLEVLKECGGCGVEIKKFEKLDFSKMYAHFEKLREEKKAMSREEKKRIKEEKEKEEEPYRTCYLNGRKELVGNFRIEPPGLFRGRGAHPKTGKLKRRVVSEQVTLNLGKDAKIPEPPAGHQWGEIRHDNEVTWLAMWKENISDSLKYVRFANNSSVKGQSDFKKFETARKLRDHVDSIRKDYTKMLKSEKMQDRQMATAMYLIDVFALRAGGEKGEDEADTVGCCSLRYEHVTLKPPNKVIFDLLGKDSIRFYQEVEVDKQVFKNLRIFKKSPKQPGDDLFDRINPSLVNRQLQNYMKGLTAKVFRTYNASKTMQDQIDIIENEGTVAEKVAKFNAANRTVAILCNHQRTVSKTHGDSVQRINDKLKKFMWQKIRLKKMILQLEPKLKKKDSKYFEEIDDLIKEDIEHIHHTIIKRQREQAKKKLERDNEKLKLEGKPLLTESDIKDKLDKIDELEKEYQKELKTGKPIVTKNATVEKLKQQIETLENRILNVSIQLKDKEDNSEVSLGTSKMNYIDPRLIVMFSKKFDVPIEKLFTKTLREKFIWAIESADENWRF.

A disordered region spans residues 1–141 (MNSSDEEDIA…ETPEEDQGYK (141 aa)). Positions 17–26 (KSSSITSAST) are enriched in low complexity. Basic and acidic residues-rich tracts occupy residues 71 to 83 (VKTE…EPKS) and 100 to 121 (EKTT…ESKT). Polar residues predominate over residues 122-131 (QSDSQASVKS). Interaction with DNA stretches follow at residues 367–368 (KY), 430–435 (RAGGEK), and 522–524 (TAK). The region spanning 374–778 (NSSVKGQSDF…IESADENWRF (405 aa)) is the Topo IB-type catalytic domain. Catalysis depends on Y736, which acts as the O-(3'-phospho-DNA)-tyrosine intermediate.

It belongs to the type IB topoisomerase family.

The enzyme catalyses ATP-independent breakage of single-stranded DNA, followed by passage and rejoining.. In terms of biological role, releases the supercoiling and torsional tension of DNA introduced during the DNA replication and transcription by transiently cleaving and rejoining one strand of the DNA duplex. Introduces a single-strand break via transesterification at a target site in duplex DNA. The scissile phosphodiester is attacked by the catalytic tyrosine of the enzyme, resulting in the formation of a DNA-(3'-phosphotyrosyl)-enzyme intermediate and the expulsion of a 5'-OH DNA strand. The free DNA strand then rotates around the intact phosphodiester bond on the opposing strand, thus removing DNA supercoils. Finally, in the religation step, the DNA 5'-OH attacks the covalent intermediate to expel the active-site tyrosine and restore the DNA phosphodiester backbone. The polypeptide is DNA topoisomerase 1 (TOP1) (Candida albicans (Yeast)).